Consider the following 663-residue polypeptide: 4-hydroxy-3-methylbut-2-en-1-yl diphosphate synthase (flavodoxin) (663 aa).

The [4Fe-4S] cluster site is built by Cys-568, Cys-571, Cys-602, and Glu-609.

The protein belongs to the IspG family. [4Fe-4S] cluster is required as a cofactor.

It catalyses the reaction (2E)-4-hydroxy-3-methylbut-2-enyl diphosphate + oxidized [flavodoxin] + H2O + 2 H(+) = 2-C-methyl-D-erythritol 2,4-cyclic diphosphate + reduced [flavodoxin]. The protein operates within isoprenoid biosynthesis; isopentenyl diphosphate biosynthesis via DXP pathway; isopentenyl diphosphate from 1-deoxy-D-xylulose 5-phosphate: step 5/6. Functionally, converts 2C-methyl-D-erythritol 2,4-cyclodiphosphate (ME-2,4cPP) into 1-hydroxy-2-methyl-2-(E)-butenyl 4-diphosphate. The chain is 4-hydroxy-3-methylbut-2-en-1-yl diphosphate synthase (flavodoxin) from Leptospira interrogans serogroup Icterohaemorrhagiae serovar copenhageni (strain Fiocruz L1-130).